Reading from the N-terminus, the 664-residue chain is Exoribonuclease 2 (664 aa).

The region spanning 193–521 (RIDMTHIPFV…INHRMLKALI (329 aa)) is the RNB domain. Residues 568-650 (QTLFTGEIFD…ENRSLVAKPT (83 aa)) enclose the S1 motif domain.

Belongs to the RNR ribonuclease family. RNase II subfamily.

The protein resides in the cytoplasm. It catalyses the reaction Exonucleolytic cleavage in the 3'- to 5'-direction to yield nucleoside 5'-phosphates.. Its function is as follows. Involved in mRNA degradation. Hydrolyzes single-stranded polyribonucleotides processively in the 3' to 5' direction. In Vibrio vulnificus (strain YJ016), this protein is Exoribonuclease 2.